The sequence spans 279 residues: Inorganic pyrophosphatase (279 aa).

Residue arginine 100 participates in diphosphate binding. Mg(2+)-binding residues include aspartate 132, aspartate 137, and aspartate 169.

It belongs to the PPase family. It depends on Mg(2+) as a cofactor.

The enzyme catalyses diphosphate + H2O = 2 phosphate + H(+). This is Inorganic pyrophosphatase (ppa1) from Dictyostelium discoideum (Social amoeba).